We begin with the raw amino-acid sequence, 121 residues long: Small ribosomal subunit protein uS13 (121 aa).

The disordered stretch occupies residues 91 to 121 (HRMSLPVRGQRTRTNARTRRGSRKTVAGRKK). The segment covering 100 to 121 (QRTRTNARTRRGSRKTVAGRKK) has biased composition (basic residues).

It belongs to the universal ribosomal protein uS13 family. In terms of assembly, part of the 30S ribosomal subunit. Forms a loose heterodimer with protein S19. Forms two bridges to the 50S subunit in the 70S ribosome.

Its function is as follows. Located at the top of the head of the 30S subunit, it contacts several helices of the 16S rRNA. In the 70S ribosome it contacts the 23S rRNA (bridge B1a) and protein L5 of the 50S subunit (bridge B1b), connecting the 2 subunits; these bridges are implicated in subunit movement. Contacts the tRNAs in the A and P-sites. The sequence is that of Small ribosomal subunit protein uS13 from Prochlorococcus marinus (strain MIT 9312).